Reading from the N-terminus, the 370-residue chain is Aminomethyltransferase (370 aa).

Belongs to the GcvT family. In terms of assembly, the glycine cleavage system is composed of four proteins: P, T, L and H.

The enzyme catalyses N(6)-[(R)-S(8)-aminomethyldihydrolipoyl]-L-lysyl-[protein] + (6S)-5,6,7,8-tetrahydrofolate = N(6)-[(R)-dihydrolipoyl]-L-lysyl-[protein] + (6R)-5,10-methylene-5,6,7,8-tetrahydrofolate + NH4(+). Its function is as follows. The glycine cleavage system catalyzes the degradation of glycine. The polypeptide is Aminomethyltransferase (Clostridium botulinum (strain 657 / Type Ba4)).